Consider the following 405-residue polypeptide: uncharacterized protein (405 aa).

This is an uncharacterized protein from Schizosaccharomyces pombe (strain 972 / ATCC 24843) (Fission yeast).